The sequence spans 204 residues: MGAYKYVSELWRKKQSDVMRFLQRVRCWEYRQQPSIVRLVRPTRPDKARRLGYKAKQGFVVYRVRVRRGGRKRPVPKGIVYGKPTNQGVTQLKFQRSKRSVAEERAGRKLGGLRVVNSYWLNEDSTYKYYEIILVDPAHNAVRNDPRINWICNPVHKHRELRGLTSEGKKNRGLRGKGHNNHKNRPSRRATWKKNNSLSLRRYR.

Residues 161 to 204 (LRGLTSEGKKNRGLRGKGHNNHKNRPSRRATWKKNNSLSLRRYR) form a disordered region. Basic residues predominate over residues 171 to 192 (NRGLRGKGHNNHKNRPSRRATW). The segment covering 193–204 (KKNNSLSLRRYR) has biased composition (polar residues).

The protein belongs to the eukaryotic ribosomal protein eL15 family.

In Arabidopsis thaliana (Mouse-ear cress), this protein is Large ribosomal subunit protein eL15z (RPL15A).